A 111-amino-acid chain; its full sequence is MTLDPNVAARLKRNADGLFTAVVQERGSGDVLMVAWMDDDALDRTLKTREATYYSRSRGEQWVKGATSGHTQYVHSVRLDCDGDTVLLTVDQVGGACHTGDHTCFDATVLL.

Mg(2+) is bound at residue aspartate 80. Cysteine 81 is a binding site for Zn(2+). Residues aspartate 82 and aspartate 84 each coordinate Mg(2+). Cysteine 97 and cysteine 104 together coordinate Zn(2+).

This sequence belongs to the PRA-CH family. As to quaternary structure, homodimer. The cofactor is Mg(2+). Zn(2+) is required as a cofactor.

The protein localises to the cytoplasm. The enzyme catalyses 1-(5-phospho-beta-D-ribosyl)-5'-AMP + H2O = 1-(5-phospho-beta-D-ribosyl)-5-[(5-phospho-beta-D-ribosylamino)methylideneamino]imidazole-4-carboxamide. It participates in amino-acid biosynthesis; L-histidine biosynthesis; L-histidine from 5-phospho-alpha-D-ribose 1-diphosphate: step 3/9. Catalyzes the hydrolysis of the adenine ring of phosphoribosyl-AMP. The chain is Phosphoribosyl-AMP cyclohydrolase from Mycobacterium ulcerans (strain Agy99).